Consider the following 1071-residue polypeptide: DNA-directed RNA polymerase subunit beta (1071 aa).

Belongs to the RNA polymerase beta chain family. As to quaternary structure, in plastids the minimal PEP RNA polymerase catalytic core is composed of four subunits: alpha, beta, beta', and beta''. When a (nuclear-encoded) sigma factor is associated with the core the holoenzyme is formed, which can initiate transcription.

It is found in the plastid. The protein localises to the chloroplast. It catalyses the reaction RNA(n) + a ribonucleoside 5'-triphosphate = RNA(n+1) + diphosphate. Its function is as follows. DNA-dependent RNA polymerase catalyzes the transcription of DNA into RNA using the four ribonucleoside triphosphates as substrates. This chain is DNA-directed RNA polymerase subunit beta, found in Acorus calamus (Sweet flag).